A 120-amino-acid polypeptide reads, in one-letter code: Large ribosomal subunit protein bL12 (120 aa).

The protein belongs to the bacterial ribosomal protein bL12 family. Homodimer. Part of the ribosomal stalk of the 50S ribosomal subunit. Forms a multimeric L10(L12)X complex, where L10 forms an elongated spine to which 2 to 4 L12 dimers bind in a sequential fashion. Binds GTP-bound translation factors.

Forms part of the ribosomal stalk which helps the ribosome interact with GTP-bound translation factors. Is thus essential for accurate translation. This is Large ribosomal subunit protein bL12 from Shouchella clausii (strain KSM-K16) (Alkalihalobacillus clausii).